The primary structure comprises 201 residues: Probable chemoreceptor glutamine deamidase CheD 2 (201 aa).

Belongs to the CheD family.

The catalysed reaction is L-glutaminyl-[protein] + H2O = L-glutamyl-[protein] + NH4(+). Its function is as follows. Probably deamidates glutamine residues to glutamate on methyl-accepting chemotaxis receptors (MCPs), playing an important role in chemotaxis. The protein is Probable chemoreceptor glutamine deamidase CheD 2 of Chromobacterium violaceum (strain ATCC 12472 / DSM 30191 / JCM 1249 / CCUG 213 / NBRC 12614 / NCIMB 9131 / NCTC 9757 / MK).